The sequence spans 239 residues: Protein GrpE (239 aa).

Disordered stretches follow at residues 1-53 (MIEE…EDLK) and 210-239 (GPGQQISQESEEKDKVDKDIDSEGSISEEN). Composition is skewed to basic and acidic residues over residues 34 to 53 (NEDKKLPDDNNEKIDAEDLK) and 219 to 230 (SEEKDKVDKDID).

It belongs to the GrpE family. As to quaternary structure, homodimer.

It is found in the cytoplasm. Participates actively in the response to hyperosmotic and heat shock by preventing the aggregation of stress-denatured proteins, in association with DnaK and GrpE. It is the nucleotide exchange factor for DnaK and may function as a thermosensor. Unfolded proteins bind initially to DnaJ; upon interaction with the DnaJ-bound protein, DnaK hydrolyzes its bound ATP, resulting in the formation of a stable complex. GrpE releases ADP from DnaK; ATP binding to DnaK triggers the release of the substrate protein, thus completing the reaction cycle. Several rounds of ATP-dependent interactions between DnaJ, DnaK and GrpE are required for fully efficient folding. The protein is Protein GrpE of Prochlorococcus marinus (strain MIT 9515).